A 343-amino-acid chain; its full sequence is Glucokinase (343 aa).

18-23 serves as a coordination point for ATP; sequence GDIGGT.

This sequence belongs to the bacterial glucokinase family.

The protein resides in the cytoplasm. It catalyses the reaction D-glucose + ATP = D-glucose 6-phosphate + ADP + H(+). The protein is Glucokinase of Brucella abortus (strain 2308).